We begin with the raw amino-acid sequence, 591 residues long: MRLFAHLAVLAILACAVPITAIPSFLSNSYPAHPAEGISLFPQTQPQAPLGLWTRLRNTVIERLWRVPPQLCKNRPGHKGKFPLFPAPASLRARYGDDVVLRFTIRNAEEVKALAEASNILFLDVWASTDEWVDIRLSKDVVPSLLGLLPKSLQTSHIPLIHDLPQTIYESYPSSSQRSSYDVQGFSPSTKHSSDKTNIFFQDYQPFSVIVPWMRLLTSMFSSRVQMINIGSTFEGRDIPALQIGVWPANNPKPRKTVVVSGGSHAREWISVSTVNYVAYSLITNYAKSKHVAELLQQFDFIFIPTLNPDGYIYTWEVDRIWRKNRQDTSLPFCPGVDLDRTWGFKWDGNITADNPCSESYPGEDPFAGIEAKQFSQWAKNQTAQNNTEFVAFIDLHSYSQQIRYPYSYSCQPDPPNLENLEELAIGIAKAIRLTNRETYEVSSACEGLMASQAKVKSDDPFPRIERTGGSALDWFYHDLNVKYSYQIKLRDRGSYGFLLPRENIVPTGQEMFNAVMVLGRFLSGHDGFGPLDWEDESQRPKAGEDDIPSDNELDENDDSWIPYDYRNHDDQNEGEGYDNDEWGFRRRRKR.

Residues 1–21 (MRLFAHLAVLAILACAVPITA) form the signal peptide. Residues 22–175 (IPSFLSNSYP…QTIYESYPSS (154 aa)) constitute a propeptide that is removed on maturation. The Peptidase M14 domain occupies 203–523 (DYQPFSVIVP…NAVMVLGRFL (321 aa)). 2 residues coordinate Zn(2+): H265 and E268. Substrate contacts are provided by residues 265-268 (HARE), R323, and 340-341 (DR). Residues C334 and C357 are joined by a disulfide bond. N-linked (GlcNAc...) asparagine glycans are attached at residues N350, N381, and N386. H397 contributes to the Zn(2+) binding site. A substrate-binding site is contributed by 398 to 399 (SY). Residues 533–591 (DWEDESQRPKAGEDDIPSDNELDENDDSWIPYDYRNHDDQNEGEGYDNDEWGFRRRRKR) are disordered. Composition is skewed to acidic residues over residues 546 to 559 (DDIPSDNELDENDD) and 573 to 582 (NEGEGYDNDE).

It belongs to the peptidase M14 family. Requires Zn(2+) as cofactor.

Its subcellular location is the vacuole. The protein localises to the secreted. In terms of biological role, inactive carboxypeptidase that may play a role in cell wall organization and biogenesis. The polypeptide is Inactive metallocarboxypeptidase ECM14 (ECM14) (Paracoccidioides brasiliensis (strain Pb03)).